Consider the following 352-residue polypeptide: C-C chemokine receptor type 5 (352 aa).

Residues 1–30 (MDYQVSSPTYDIDYYTSEPCQKVNVKQIAA) are Extracellular-facing. At Tyr-3 the chain carries Sulfotyrosine. O-linked (GalNAc...) serine glycans are attached at residues Ser-6 and Ser-7. 3 positions are modified to sulfotyrosine: Tyr-10, Tyr-14, and Tyr-15. 2 disulfides stabilise this stretch: Cys-20/Cys-269 and Cys-101/Cys-178. Residues 31 to 58 (RLLPPLYSLVFIFGFVGNILVVLILINC) form a helical membrane-spanning segment. At 59–68 (KRLKSMTDIY) the chain is on the cytoplasmic side. Residues 69-89 (LLNLAISDLFFLLTVPFWAHY) traverse the membrane as a helical segment. Over 90–102 (AAAQWDFGNTMCQ) the chain is Extracellular. A helical membrane pass occupies residues 103–124 (LLTGLYFIGFFSGIFFIILLTI). At 125 to 141 (DRYLAIVHAVFALKART) the chain is on the cytoplasmic side. The helical transmembrane segment at 142–166 (VTFGVVTSVITWVVAVFASLPGIIF) threads the bilayer. At 167-198 (TRSQREGVHYTCSSHFPYSQYQFWKNFQTLKI) the chain is on the extracellular side. Residues 199–218 (VILGLVLPLLVMVICYSGIL) form a helical membrane-spanning segment. The Cytoplasmic portion of the chain corresponds to 219 to 235 (KTLLRCRNEKKRHRAVR). Residues 236-260 (LIFTIMIVYFLFWAPYNIVLLLNTF) traverse the membrane as a helical segment. The Extracellular segment spans residues 261 to 277 (QEFFGLNNCSSSNRLDQ). A helical transmembrane segment spans residues 278-301 (AMQVTETLGMTHCCINPIIYAFVG). Residues 302 to 352 (EKFRNYLLVFFQKHIAKRFCKCCSIFQQEAPERASSVYTRSTGEQETSVGL) lie on the Cytoplasmic side of the membrane. Residues Cys-321, Cys-323, and Cys-324 are each lipidated (S-palmitoyl cysteine). 4 positions are modified to phosphoserine; by BARK1: Ser-336, Ser-337, Ser-342, and Ser-349.

It belongs to the G-protein coupled receptor 1 family. As to quaternary structure, interacts with PRAF2. Efficient ligand binding to CCL3/MIP-1alpha and CCL4/MIP-1beta requires sulfation, O-glycosylation and sialic acid modifications. Glycosylation on Ser-6 is required for efficient binding of CCL4. Interacts with GRK2. Interacts with ARRB1 and ARRB2. Interacts with CNIH4. Interacts with S100A4; this interaction stimulates T-lymphocyte chemotaxis. Post-translationally, sulfated on at least 2 of the N-terminal tyrosines. Sulfation is required for efficient binding of the chemokines, CCL3 and CCL4. In terms of processing, palmitoylation in the C-terminal is important for cell surface expression. Phosphorylation on serine residues in the C-terminal is stimulated by binding CC chemokines especially by APO-RANTES. Post-translationally, O-glycosylated, but not N-glycosylated. Ser-6 appears to be the major site even if Ser-7 may be also O-glycosylated. Also sialylated glycans present which contribute to chemokine binding. Thr-16 and Ser-17 may also be glycosylated and, if so, with small moieties such as a T-antigen.

It is found in the cell membrane. In terms of biological role, receptor for a number of inflammatory CC-chemokines including CCL3/MIP-1-alpha, CCL4/MIP-1-beta and RANTES and subsequently transduces a signal by increasing the intracellular calcium ion level. May play a role in the control of granulocytic lineage proliferation or differentiation. Participates in T-lymphocyte migration to the infection site by acting as a chemotactic receptor. The chain is C-C chemokine receptor type 5 (CCR5) from Rhinopithecus avunculus (Tonkin snub-nosed monkey).